Here is a 158-residue protein sequence, read N- to C-terminus: Large ribosomal subunit protein bL35m (158 aa).

This sequence belongs to the bacterial ribosomal protein bL35 family.

The protein resides in the mitochondrion. This is Large ribosomal subunit protein bL35m (mrpl-35) from Caenorhabditis elegans.